The primary structure comprises 510 residues: Putative folylpolyglutamate synthase (510 aa).

Residue 98–101 (GKGS) participates in ATP binding. Residues Ser-122, Glu-189, and His-217 each coordinate Mg(2+). The ATP site is built by Arg-342 and Asp-357.

It belongs to the folylpolyglutamate synthase family. It depends on a monovalent cation as a cofactor.

It localises to the mitochondrion inner membrane. The protein resides in the mitochondrion matrix. The protein localises to the cytoplasm. The enzyme catalyses (6S)-5,6,7,8-tetrahydrofolyl-(gamma-L-Glu)(n) + L-glutamate + ATP = (6S)-5,6,7,8-tetrahydrofolyl-(gamma-L-Glu)(n+1) + ADP + phosphate + H(+). Its pathway is cofactor biosynthesis; tetrahydrofolylpolyglutamate biosynthesis. Its function is as follows. Catalyzes conversion of folates to polyglutamate derivatives allowing concentration of folate compounds in the cell and the intracellular retention of these cofactors, which are important substrates for most of the folate-dependent enzymes that are involved in one-carbon transfer reactions involved in purine, pyrimidine and amino acid synthesis. The polypeptide is Putative folylpolyglutamate synthase (Caenorhabditis elegans).